Consider the following 200-residue polypeptide: dITP/XTP pyrophosphatase (200 aa).

Residue 7-12 participates in substrate binding; it reads SNNYHK. Residue Asp-68 is the Proton acceptor of the active site. Asp-68 is a Mg(2+) binding site. Substrate-binding positions include Ser-69, 147 to 150, Lys-170, and 175 to 176; these read FGYD and HR.

It belongs to the HAM1 NTPase family. As to quaternary structure, homodimer. Requires Mg(2+) as cofactor.

The catalysed reaction is XTP + H2O = XMP + diphosphate + H(+). It carries out the reaction dITP + H2O = dIMP + diphosphate + H(+). It catalyses the reaction ITP + H2O = IMP + diphosphate + H(+). Functionally, pyrophosphatase that catalyzes the hydrolysis of nucleoside triphosphates to their monophosphate derivatives, with a high preference for the non-canonical purine nucleotides XTP (xanthosine triphosphate), dITP (deoxyinosine triphosphate) and ITP. Seems to function as a house-cleaning enzyme that removes non-canonical purine nucleotides from the nucleotide pool, thus preventing their incorporation into DNA/RNA and avoiding chromosomal lesions. This Acholeplasma laidlawii (strain PG-8A) protein is dITP/XTP pyrophosphatase.